The sequence spans 519 residues: S-type anion channel SLAH2 (519 aa).

A disordered region spans residues 1–31 (MNNPRSVSPLVSPANHSDLLENQRQSGSGDF). At 1–140 (MNNPRSVSPL…LPEDKTWPFL (140 aa)) the chain is on the cytoplasmic side. The span at 20-29 (LENQRQSGSG) shows a compositional bias: polar residues. Residues Ser77 and Ser85 each carry the phosphoserine modification. Residues 141 to 161 (LRFPITSYGMCLGVSSQAIMW) traverse the membrane as a helical segment. At 162–185 (KTLATTEAEKFLHVTQVINHVLWW) the chain is on the extracellular side. A helical membrane pass occupies residues 186–206 (ISLLLLLAVSITYLFKTILFF). Over 207–220 (EAVRREFRHPIRVN) the chain is Cytoplasmic. A helical membrane pass occupies residues 221 to 241 (FFFAPLISILFLALGIPHSII). The Extracellular portion of the chain corresponds to 242 to 247 (SHLPST). A helical transmembrane segment spans residues 248–268 (LWYFLMAPILFLEMKIYGQWM). Residues 269-281 (SGGQRRLSKVANP) lie on the Cytoplasmic side of the membrane. The helical transmembrane segment at 282 to 302 (TNHLSIVGNFAGALLGASMGL) threads the bilayer. Residues 303–304 (KE) are Extracellular-facing. Residues 305-325 (GPIFFFAIGLAYYLVLFVTLY) form a helical membrane-spanning segment. The Cytoplasmic segment spans residues 326–340 (QRLPTNETLPKELHP). Residues 341–361 (VFFLFVAAPAVASMAWTKISA) form a helical membrane-spanning segment. Position 362 (Ser362) is a topological domain, extracellular. The helical transmembrane segment at 363–383 (FDLGSRLAYFISLFLYFSLVC) threads the bilayer. The Cytoplasmic segment spans residues 384–389 (RINLFR). Residues 390–410 (GFKFSLAWWAYTFPMTAVASA) traverse the membrane as a helical segment. Topologically, residues 411-424 (TIKYSDEVTGVATK) are extracellular. Residues 425–445 (ILSVVMSGAATLTVIAVLGLT) form a helical membrane-spanning segment. Residues 446 to 519 (VMHAFVQRDL…VDSSTVQNSN (74 aa)) are Cytoplasmic-facing. Residues 495–519 (PEDNQIDLESPPLVNVDSSTVQNSN) form a disordered region. A compositionally biased stretch (polar residues) spans 510–519 (VDSSTVQNSN).

The protein belongs to the SLAC1 S-type anion channel family. Homotrimer. As to expression, expressed in lateral root primordia and tap root tips.

It localises to the cell membrane. Slow, weak voltage-dependent S-type anion efflux channel involved in maintenance of anion homeostasis. This chain is S-type anion channel SLAH2 (SLAH2), found in Arabidopsis thaliana (Mouse-ear cress).